The following is a 158-amino-acid chain: Transcription elongation factor GreA (158 aa).

This sequence belongs to the GreA/GreB family.

Functionally, necessary for efficient RNA polymerase transcription elongation past template-encoded arresting sites. The arresting sites in DNA have the property of trapping a certain fraction of elongating RNA polymerases that pass through, resulting in locked ternary complexes. Cleavage of the nascent transcript by cleavage factors such as GreA or GreB allows the resumption of elongation from the new 3'terminus. GreA releases sequences of 2 to 3 nucleotides. The protein is Transcription elongation factor GreA of Verminephrobacter eiseniae (strain EF01-2).